Here is a 160-residue protein sequence, read N- to C-terminus: Cytochrome b6-f complex subunit 4 (160 aa).

3 helical membrane passes run 36–56 (LLYMFPVVILGTFALSISLAV), 95–115 (LLGVLCMAAVPVGLITVPFIE), and 131–151 (TLFLFGTATAVWLGIGAALPI).

This sequence belongs to the cytochrome b family. PetD subfamily. In terms of assembly, the 4 large subunits of the cytochrome b6-f complex are cytochrome b6, subunit IV (17 kDa polypeptide, petD), cytochrome f and the Rieske protein, while the 4 small subunits are petG, petL, petM and petN. The complex functions as a dimer.

The protein resides in the plastid. It is found in the chloroplast thylakoid membrane. Its function is as follows. Component of the cytochrome b6-f complex, which mediates electron transfer between photosystem II (PSII) and photosystem I (PSI), cyclic electron flow around PSI, and state transitions. In Oltmannsiellopsis viridis (Marine flagellate), this protein is Cytochrome b6-f complex subunit 4.